Consider the following 215-residue polypeptide: MTQTLADMRRDYTRDGLTEAQSPQEPFALFHTWFEEAVKTEQPPVEANAMTLATVDEEGRPHCRVLLLKGLDAQGFTFFTNYESAKGRQLAAHPFAAMTFFWPALERQVRIEGRVEKVSAQESDAYYQVRPLGSRLGAWASPQSRVIADRDELEGLIRQTEQRFADTQPHCPEHWGGYRLLPERIEFWQGRSSRLHDRLNYRLINAKWARERLAP.

Substrate is bound by residues 9–12 (RRDY) and Lys69. FMN is bound by residues 64–69 (RVLLLK), 79–80 (FT), Lys86, and Gln108. 3 residues coordinate substrate: Tyr126, Arg130, and Ser134. Residues 143–144 (QS) and Trp188 each bind FMN. 194–196 (RLH) provides a ligand contact to substrate. Residue Arg198 coordinates FMN.

The protein belongs to the pyridoxamine 5'-phosphate oxidase family. Homodimer. The cofactor is FMN.

The catalysed reaction is pyridoxamine 5'-phosphate + O2 + H2O = pyridoxal 5'-phosphate + H2O2 + NH4(+). It catalyses the reaction pyridoxine 5'-phosphate + O2 = pyridoxal 5'-phosphate + H2O2. It functions in the pathway cofactor metabolism; pyridoxal 5'-phosphate salvage; pyridoxal 5'-phosphate from pyridoxamine 5'-phosphate: step 1/1. It participates in cofactor metabolism; pyridoxal 5'-phosphate salvage; pyridoxal 5'-phosphate from pyridoxine 5'-phosphate: step 1/1. In terms of biological role, catalyzes the oxidation of either pyridoxine 5'-phosphate (PNP) or pyridoxamine 5'-phosphate (PMP) into pyridoxal 5'-phosphate (PLP). In Pseudomonas syringae pv. tomato (strain ATCC BAA-871 / DC3000), this protein is Pyridoxine/pyridoxamine 5'-phosphate oxidase.